Consider the following 145-residue polypeptide: Large ribosomal subunit protein uL15 (145 aa).

Residues 1–58 form a disordered region; it reads MKLHELSPSEGSRKKRKRVGRGPGSGMGGTSTRGNKGHNQRSGGGTRPGFEGGQMPLH. Gly residues-rich tracts occupy residues 21-31 and 42-52; these read RGPGSGMGGTS and SGGGTRPGFEG.

The protein belongs to the universal ribosomal protein uL15 family. As to quaternary structure, part of the 50S ribosomal subunit.

In terms of biological role, binds to the 23S rRNA. The sequence is that of Large ribosomal subunit protein uL15 from Desulforapulum autotrophicum (strain ATCC 43914 / DSM 3382 / VKM B-1955 / HRM2) (Desulfobacterium autotrophicum).